The primary structure comprises 88 residues: Small ribosomal subunit protein uS15c (88 aa).

This sequence belongs to the universal ribosomal protein uS15 family. In terms of assembly, part of the 30S ribosomal subunit.

The protein resides in the plastid. The protein localises to the chloroplast. This Aethionema grandiflorum (Persian stone-cress) protein is Small ribosomal subunit protein uS15c (rps15).